Here is a 208-residue protein sequence, read N- to C-terminus: Uracil phosphoribosyltransferase (208 aa).

5-phospho-alpha-D-ribose 1-diphosphate-binding positions include arginine 78, arginine 103, and 130-138 (DPMLATGGS). Uracil is bound by residues isoleucine 193 and 198–200 (GDA). Aspartate 199 contributes to the 5-phospho-alpha-D-ribose 1-diphosphate binding site.

The protein belongs to the UPRTase family. Mg(2+) serves as cofactor.

The catalysed reaction is UMP + diphosphate = 5-phospho-alpha-D-ribose 1-diphosphate + uracil. Its pathway is pyrimidine metabolism; UMP biosynthesis via salvage pathway; UMP from uracil: step 1/1. Allosterically activated by GTP. Functionally, catalyzes the conversion of uracil and 5-phospho-alpha-D-ribose 1-diphosphate (PRPP) to UMP and diphosphate. This Shewanella woodyi (strain ATCC 51908 / MS32) protein is Uracil phosphoribosyltransferase.